Consider the following 266-residue polypeptide: 4-diphosphocytidyl-2-C-methyl-D-erythritol kinase (266 aa).

Lysine 11 is a catalytic residue. 103–113 provides a ligand contact to ATP; it reads PTFAGLGGGSS. Residue aspartate 145 is part of the active site.

The protein belongs to the GHMP kinase family. IspE subfamily.

The catalysed reaction is 4-CDP-2-C-methyl-D-erythritol + ATP = 4-CDP-2-C-methyl-D-erythritol 2-phosphate + ADP + H(+). It functions in the pathway isoprenoid biosynthesis; isopentenyl diphosphate biosynthesis via DXP pathway; isopentenyl diphosphate from 1-deoxy-D-xylulose 5-phosphate: step 3/6. Catalyzes the phosphorylation of the position 2 hydroxy group of 4-diphosphocytidyl-2C-methyl-D-erythritol. The polypeptide is 4-diphosphocytidyl-2-C-methyl-D-erythritol kinase (Sulfurimonas denitrificans (strain ATCC 33889 / DSM 1251) (Thiomicrospira denitrificans (strain ATCC 33889 / DSM 1251))).